The primary structure comprises 723 residues: ABC transporter F family member 4 (723 aa).

The disordered stretch occupies residues M1–E117. Positions S18–L31 are enriched in basic and acidic residues. Over residues G50–T65 the composition is skewed to polar residues. Residues P72 to E84 show a composition bias toward acidic residues. Basic and acidic residues predominate over residues K95–E117. In terms of domain architecture, ABC transporter 1 spans I163–D423. Residue G195–S202 participates in ATP binding. Disordered regions lie at residues L256–D275 and K427–A472. The span at E266 to D275 shows a compositional bias: acidic residues. Residues Q437–K446 are compositionally biased toward basic and acidic residues. The 226-residue stretch at L496 to V721 folds into the ABC transporter 2 domain. G530–S537 contributes to the ATP binding site.

It belongs to the ABC transporter superfamily. ABCF family. EF3 (TC 3.A.1.121) subfamily.

The chain is ABC transporter F family member 4 (ABCF4) from Arabidopsis thaliana (Mouse-ear cress).